A 309-amino-acid polypeptide reads, in one-letter code: Mitochondrial brown fat uncoupling protein 1 (309 aa).

At V2–P10 the chain is on the mitochondrial intermembrane side. A helical transmembrane segment spans residues P11 to F32. Solcar repeat units follow at residues P11–F106, A113–A203, and D212–E297. At P33–K77 the chain is on the mitochondrial matrix side. K60 provides a ligand contact to fatty acid 16:0. Residues L78 to Y100 traverse the membrane as a helical segment. The Mitochondrial intermembrane portion of the chain corresponds to D101–K118. The chain crosses the membrane as a helical span at residues I119–P135. Residues T136 to T180 lie on the Mitochondrial matrix side of the membrane. A helical transmembrane segment spans residues P181–Y197. The Mitochondrial intermembrane portion of the chain corresponds to D198–V214. The helical transmembrane segment at P215–P234 threads the bilayer. The Mitochondrial matrix segment spans residues V235–A268. C256 carries the post-translational modification Cysteine sulfenic acid (-SOH). Residues F269–F291 form a helical membrane-spanning segment. K271 serves as a coordination point for fatty acid 16:0. Residues E292–T309 are Mitochondrial intermembrane-facing.

This sequence belongs to the mitochondrial carrier (TC 2.A.29) family. Most probably functions as a monomer. Binds one purine nucleotide per monomer. However, has also been suggested to function as a homodimer or a homotetramer. Tightly associates with cardiolipin in the mitochondrion inner membrane; may stabilize and regulate its activity. May undergo sulfenylation upon cold exposure. May increase the sensitivity of UCP1 thermogenic function to the activation by noradrenaline probably through structural effects. Post-translationally, may undergo ubiquitin-mediated proteasomal degradation.

It localises to the mitochondrion inner membrane. It catalyses the reaction H(+)(in) = H(+)(out). With respect to regulation, has no constitutive proton transporter activity and has to be activated by long-chain fatty acids/LCFAs. Inhibited by purine nucleotides. Both purine nucleotides and LCFAs bind the cytosolic side of the transporter and directly compete to activate or inhibit it. Activated by noradrenaline and reactive oxygen species. Despite lacking canonical translational encoding for selenocysteine, a small pool of the protein has been observed to selectively incorporate selenocysteine at 'Cys-256'. Selenocysteine-modified protein is highly sensitive to redox modification and may constitute a pool of protein highly sensitive to activation by elevated levels of reactive oxygen species (ROS). Its function is as follows. Mitochondrial protein responsible for thermogenic respiration, a specialized capacity of brown adipose tissue and beige fat that participates in non-shivering adaptive thermogenesis to temperature and diet variations and more generally to the regulation of energy balance. Functions as a long-chain fatty acid/LCFA and proton symporter, simultaneously transporting one LCFA and one proton through the inner mitochondrial membrane. However, LCFAs remaining associated with the transporter via their hydrophobic tails, it results in an apparent transport of protons activated by LCFAs. Thereby, dissipates the mitochondrial proton gradient and converts the energy of substrate oxydation into heat instead of ATP. Regulates the production of reactive oxygen species/ROS by mitochondria. The sequence is that of Mitochondrial brown fat uncoupling protein 1 from Bos taurus (Bovine).